Reading from the N-terminus, the 220-residue chain is Ras-related protein Rab-3A (220 aa).

11 residues coordinate GTP: serine 31, serine 32, valine 33, glycine 34, lysine 35, threonine 36, serine 37, threonine 48, proline 49, serine 53, and threonine 54. Threonine 36 serves as a coordination point for Mg(2+). A Switch 1 motif is present at residues 49–58 (PAFVSTVGID). Residues threonine 54 and aspartate 77 each contribute to the Mg(2+) site. Glycine 80 is a GTP binding site. Positions 80–96 (GQERYRTITTAYYRGAM) match the Switch 2 motif. Threonine 86 carries the phosphothreonine; by LRRK2 modification. Positions 135, 136, 138, 166, and 167 each coordinate GTP. Phosphoserine occurs at positions 188 and 190. Positions 194-220 (ADPAVTGAKQGPQLSDQQVPPHQDCAC) are disordered. 2 S-geranylgeranyl cysteine lipidation sites follow: cysteine 218 and cysteine 220. Position 220 is a cysteine methyl ester (cysteine 220).

This sequence belongs to the small GTPase superfamily. Rab family. Interacts with RIMS1 and RIMS2. Interacts with Rabphilin-3A/RPH3A and Rab effector Noc2/RPH3AL. Interacts with SYTL4. Interacts with RAB3IP. Interacts with SGSM1 and SGSM3. Interacts with SYT1. Interacts with MYH9; this interaction is essential for lysosome exocytosis and plasma membrane repair. Interacts with STXBP1; this interaction promotes RAB3A dissociation from the vesicle membrane. Interacts with SNCA. The GTP-bound form interacts with REP15. Interacts with GDI1, GDI2, CHM and CHML; phosphorylation at Thr-86 disrupts these interactions. Interacts with MADD (via uDENN domain); the GTP-bound form is preferred for interaction. The cofactor is Mg(2+). In terms of processing, phosphorylation of Thr-86 in the switch II region by LRRK2 prevents the association of RAB regulatory proteins, including CHM, CHML and RAB GDP dissociation inhibitors GDI1 and GDI2. In terms of tissue distribution, specifically expressed in brain.

Its subcellular location is the cytoplasm. It localises to the cytosol. The protein resides in the lysosome. It is found in the cytoplasmic vesicle. The protein localises to the secretory vesicle. Its subcellular location is the cell projection. It localises to the axon. The protein resides in the cell membrane. It is found in the presynapse. The protein localises to the postsynapse. It catalyses the reaction GTP + H2O = GDP + phosphate + H(+). With respect to regulation, regulated by guanine nucleotide exchange factors (GEFs) including RAB3IL1 and MADD which promote the exchange of bound GDP for free GTP. Regulated by GTPase activating proteins (GAPs) including RAB3GAP1 and TBC1D10B which increase the GTP hydrolysis activity. Inhibited by GDP dissociation inhibitors (GDIs) which prevent Rab-GDP dissociation. Functionally, the small GTPases Rab are key regulators of intracellular membrane trafficking, from the formation of transport vesicles to their fusion with membranes. Rabs cycle between an inactive GDP-bound form and an active GTP-bound form that is able to recruit to membranes different sets of downstream effectors directly responsible for vesicle formation, movement, tethering and fusion. RAB3A plays a central role in regulated exocytosis and secretion. Controls the recruitment, tethering and docking of secretory vesicles to the plasma membrane. Upon stimulation, switches to its active GTP-bound form, cycles to vesicles and recruits effectors such as RIMS1, RIMS2, Rabphilin-3A/RPH3A, RPH3AL or SYTL4 to help the docking of vesicules onto the plasma membrane. Upon GTP hydrolysis by GTPase-activating protein, dissociates from the vesicle membrane allowing the exocytosis to proceed. Stimulates insulin secretion through interaction with RIMS2 or RPH3AL effectors in pancreatic beta cells. Regulates calcium-dependent lysosome exocytosis and plasma membrane repair (PMR) via the interaction with 2 effectors, SYTL4 and myosin-9/MYH9. Acts as a positive regulator of acrosome content secretion in sperm cells by interacting with RIMS1. Also plays a role in the regulation of dopamine release by interacting with synaptotagmin I/SYT. The sequence is that of Ras-related protein Rab-3A from Homo sapiens (Human).